The following is a 1976-amino-acid chain: Myosin-10 (1976 aa).

R18 is modified (omega-N-methylarginine). Positions 31-81 constitute a Myosin N-terminal SH3-like domain; that stretch reads TAKKLVWIPSERHGFEAASIKEERGDEVMVELAENGKKAMVNKDDIQKMNP. Residues 85–783 form the Myosin motor domain; sequence SKVEDMAELT…VLAHLEEERD (699 aa). ATP is bound at residue 178 to 185; that stretch reads GESGAGKT. L214 carries the phosphoserine modification. N6-acetyllysine is present on K442. The actin-binding stretch occupies residues 661–683; it reads LTKLMATLRNTNPNFVRCIIPNH. Positions 786–815 constitute an IQ domain; the sequence is ITDIIIFFQAVCRGYLARKAFAKKQQQLSA. A coiled-coil region spans residues 845 to 1976; sequence LQVTRQEEEL…VNETQPPQSE (1132 aa). The tract at residues 1127-1147 is disordered; the sequence is FESEKASRNKAEKQKRDLSEE. Basic and acidic residues predominate over residues 1129 to 1147; sequence SEKASRNKAEKQKRDLSEE. S1145 is subject to Phosphoserine. An N6-acetyllysine mark is found at K1241, K1301, and K1645. Disordered regions lie at residues 1697-1728 and 1872-1976; these read ASSE…SALL and MEKA…PQSE. Over residues 1698 to 1708 the composition is skewed to basic and acidic residues; it reads SSERARRHAEQ. R1930 is modified (omega-N-methylarginine). Phosphoserine is present on residues S1935, S1937, S1938, and S1939. Position 1940 is an omega-N-methylarginine (R1940). S1952 and S1956 each carry phosphoserine. A Phosphothreonine modification is found at T1960. A compositionally biased stretch (polar residues) spans 1967 to 1976; the sequence is VNETQPPQSE. S1975 carries the post-translational modification Phosphoserine.

It belongs to the TRAFAC class myosin-kinesin ATPase superfamily. Myosin family. As to quaternary structure, myosin is a hexameric protein that consists of 2 heavy chain subunits (MHC), 2 alkali light chain subunits (MLC) and 2 regulatory light chain subunits (MLC-2). Interacts with PLEKHG6. Interacts with ECPAS. Interacts with KIF26B. Interacts with LARP6. Interacts with MCC. Interacts with CFAP95. In terms of assembly, (Microbial infection) Interacts with herpes simplex virus 1/HHV-1 envelope glycoprotein B. In terms of processing, phosphorylated by ABL2. In terms of tissue distribution, isoform 1 is expressed in cerebellum and spinal chord. Isoform 2 is expressed in cerebrum and retina. Isoform 3 is expressed in the cerebrum and to a much lower extent in cerebellum.

It localises to the cell projection. It is found in the lamellipodium. The protein resides in the cell membrane. Functionally, cellular myosin that appears to play a role in cytokinesis, cell shape, and specialized functions such as secretion and capping. Involved with LARP6 in the stabilization of type I collagen mRNAs for CO1A1 and CO1A2. During cell spreading, plays an important role in cytoskeleton reorganization, focal contacts formation (in the central part but not the margins of spreading cells), and lamellipodial extension; this function is mechanically antagonized by MYH9. In terms of biological role, (Microbial infection) Acts as a receptor for herpes simplex virus 1/HHV-1 envelope glycoprotein B. The polypeptide is Myosin-10 (MYH10) (Homo sapiens (Human)).